Consider the following 468-residue polypeptide: Beta-monoglucosyldiacylglycerol synthase (468 aa).

The next 4 membrane-spanning stretches (helical) occupy residues 51 to 71 (AALVLTIVWSGTIALHLVSWG), 72 to 92 (SIFILGLTTVLGIHALGVVFA), 361 to 381 (FMLTMYILPTAAIPDLLMAVV), and 387 to 407 (MLGPVTGLSVTMSVVGMFAGL).

The protein belongs to the glycosyltransferase 2 family. Requires Mg(2+) as cofactor.

The protein localises to the membrane. The enzyme catalyses a 1,2-diacyl-sn-glycerol + UDP-alpha-D-glucose = a 1,2-diacyl-3-O-(beta-D-glucopyranosyl)-sn-glycerol + UDP + H(+). In terms of biological role, glucosyltransferase involved in the biosynthesis of the non-bilayer-forming membrane lipid beta-monoglucosyldiacylglycerol which contributes to regulate the properties and stability of the membrane. Catalyzes the transfer of a glucosyl residue from UDP-Glc to diacylglycerol (DAG) acceptor to form the corresponding beta-glucosyl-DAG (1,2-diacyl-3-O-(beta-D-glucopyranosyl)-sn-glycerol). It can only use UDP-Glc as sugar donor. The chain is Beta-monoglucosyldiacylglycerol synthase from Trichormus variabilis (strain ATCC 29413 / PCC 7937) (Anabaena variabilis).